The sequence spans 186 residues: MTIADIKKNTEAKMDQSIVAFKNNLAKIRTGRANPALLDSVQVEYYGSMVPLSQVANVSLIDARTISVQPWEKGMGAKIEKAIRESELGLNPASMGDLIRVPMPPMSEERRKEMTKLARNEGEGAKVAVRNLRRDANESVKKLVKDKLASEDEQKRAEADIQKVTDKHIAEVDALVAAKEQEIMAV.

This sequence belongs to the RRF family.

The protein resides in the cytoplasm. Functionally, responsible for the release of ribosomes from messenger RNA at the termination of protein biosynthesis. May increase the efficiency of translation by recycling ribosomes from one round of translation to another. The polypeptide is Ribosome-recycling factor (Paracidovorax citrulli (strain AAC00-1) (Acidovorax citrulli)).